The primary structure comprises 532 residues: Intercellular adhesion molecule 1 (532 aa).

The N-terminal stretch at 1-27 is a signal peptide; sequence MAPSSPRPALPALLVLLGALFPGPGNA. Topologically, residues 28-480 are extracellular; that stretch reads QTSVSPPKVI…TVNVLSPRYE (453 aa). 2 consecutive Ig-like C2-type domains span residues 41 to 103 and 128 to 193; these read GGSV…QSTA and GKDL…LDLR. Cystine bridges form between Cys48–Cys92, Cys52–Cys96, and Cys135–Cys186. Residues 152-154 carry the Cell attachment site; atypical motif; sequence RGE. N-linked (GlcNAc...) asparagine glycans are attached at residues Asn202 and Asn267. Ig-like C2-type domains are found at residues 230-297 and 325-378; these read DTQG…LGTQ and GTEV…LEVA. 2 cysteine pairs are disulfide-bonded: Cys237–Cys290 and Cys332–Cys371. N-linked (GlcNAc...) asparagine glycosylation is found at Asn385 and Asn406. 3 disulfide bridges follow: Cys403-Cys419, Cys419-Cys457, and Cys431-Cys457. One can recognise an Ig-like C2-type 5 domain in the interval 412–464; sequence NSQQTPMCQAWGNPLPELKCLKDGTFPLPVGESVTVTRDLEGTYLCRARSTQG. A helical transmembrane segment spans residues 481–503; it reads FVIIAVVAAAVIMGTAGLSTYLY. Residues 504–532 are Cytoplasmic-facing; it reads NRQRKIRKYRLQQAQKGTPMKPNTQATPP. A phosphothreonine mark is found at Thr521 and Thr530.

This sequence belongs to the immunoglobulin superfamily. ICAM family. In terms of assembly, homodimer. Interacts with MUC1 and promotes cell aggregation in epithelial cells. Interacts with ARHGEF26/SGEF. Interacts (on T cell side) with CD81, CD247 and CD9 at immunological synapses between antigen-presenting cells and T cells. Monoubiquitinated, which is promoted by MARCH9 and leads to endocytosis.

Its subcellular location is the membrane. ICAM proteins are ligands for the leukocyte adhesion protein LFA-1 (integrin alpha-L/beta-2). During leukocyte trans-endothelial migration, ICAM1 engagement promotes the assembly of endothelial apical cups through ARHGEF26/SGEF and RHOG activation. The chain is Intercellular adhesion molecule 1 (ICAM1) from Gorilla gorilla gorilla (Western lowland gorilla).